The following is a 160-amino-acid chain: Endoribonuclease YbeY (160 aa).

3 residues coordinate Zn(2+): His-125, His-129, and His-135.

The protein belongs to the endoribonuclease YbeY family. Zn(2+) serves as cofactor.

The protein resides in the cytoplasm. In terms of biological role, single strand-specific metallo-endoribonuclease involved in late-stage 70S ribosome quality control and in maturation of the 3' terminus of the 16S rRNA. The sequence is that of Endoribonuclease YbeY from Leuconostoc mesenteroides subsp. mesenteroides (strain ATCC 8293 / DSM 20343 / BCRC 11652 / CCM 1803 / JCM 6124 / NCDO 523 / NBRC 100496 / NCIMB 8023 / NCTC 12954 / NRRL B-1118 / 37Y).